The primary structure comprises 1254 residues: Structural polyprotein (1254 aa).

The tract at residues 1–33 (MFPFQPMYPMQPMPYRNPFAAPRRPWFPRTDPF) is necessary for nucleocapsid assembly and virus assembly. The segment at 33-68 (FLAMQVQELTRSMANLTFKQRRGAPPEGPPAKKSKR) is host transcription inhibition. A Supraphysiological nuclear export signal motif is present at residues 41-48 (LTRSMANL). N-linked (GlcNAc...) asparagine; by host glycosylation occurs at N47. Residues 48–118 (LTFKQRRGAP…KKPGKRQRMV (71 aa)) are disordered. The Nuclear localization signal motif lies at 64-68 (KKSKR). A compositionally biased stretch (basic residues) spans 76-91 (GGQRKKKKNEGKKKAK). Residues 90 to 126 (AKTGPPNLKTQNGNKKKTNKKPGKRQRMVMKLESDKT) form a binding to the viral RNA region. Residues T92 and T107 each carry the phosphothreonine modification. Over residues 103-117 (NKKKTNKKPGKRQRM) the composition is skewed to basic residues. Positions 111-125 (PGKRQRMVMKLESDK) are ribosome-binding. A Phosphoserine modification is found at S123. The 150-residue stretch at 125 to 274 (KTFPIMLEGK…KYTPENCEQW (150 aa)) folds into the Peptidase S3 domain. T126 carries the post-translational modification Phosphothreonine. Residue H151 is the Charge relay system of the active site. The segment at 167–172 (KKASKY) is interaction with spike glycoprotein E2. Residues D173 and S225 each act as charge relay system in the active site. The tract at residues 259–263 (EKGVT) is interaction with spike glycoprotein E2. Residues 275-286 (SLVTTMCLLANV) form a functions as an uncleaved signal peptide for the precursor of protein E3/E2 region. The Extracellular portion of the chain corresponds to 275 to 702 (SLVTTMCLLA…YHRYPMSTIT (428 aa)). 7 cysteine pairs are disulfide-bonded: C281-C290, C352-C456, C355-C360, C423-C437, C484-C599, C533-C559, and C535-C553. N-linked (GlcNAc...) asparagine; by host glycosylation is present at N285. N-linked (GlcNAc...) asparagine; by host glycans are attached at residues N545 and N651. The helical transmembrane segment at 703–723 (GLSICAAIVAVSIAASTWLLC) threads the bilayer. The tract at residues 724-728 (RSRAS) is interaction with the capsid protein. Topologically, residues 724-756 (RSRASCLTPYRLTPNAKMPLCLAVLCCARSARA) are cytoplasmic. Residues C729, C749, and C750 are each lipidated (S-palmitoyl cysteine; by host). Residues C729 and C750 are joined by a disulfide bond. Residues 735–754 (LTPNAKMPLCLAVLCCARSA) form a transient transmembrane before p62-6K protein processing region. Residues 757–768 (ETTWESLDHLWN) lie on the Extracellular side of the membrane. The chain crosses the membrane as a helical span at residues 769-789 (NNQQMFWTQLLIPLAALIVVT). A topological domain (cytoplasmic) is located at residue R790. Residues 791 to 811 (LLKCMCCVVPFLVVAGAAGAG) form a helical membrane-spanning segment. The Extracellular portion of the chain corresponds to 812-1224 (AYEHATTMPN…SKTAWTWLTS (413 aa)). Disulfide bonds link C861–C926, C874–C906, C875–C908, and C880–C890. The tract at residues 896-913 (VYPFMWGGAYCFCDTENT) is E1 fusion peptide loop. N-linked (GlcNAc...) asparagine; by host glycans are attached at residues N946 and N1082. Intrachain disulfides connect C1071–C1083, C1113–C1188, C1118–C1192, and C1140–C1182. A helical transmembrane segment spans residues 1225-1245 (LLGGSAVIIIIGLVLATLVAM). Topologically, residues 1246 to 1254 (YVLTNQKHN) are cytoplasmic.

As to quaternary structure, homodimer. Homomultimer. Interacts with host karyopherin KPNA4; this interaction allows the nuclear import of the viral capsid protein. Interacts with spike glycoprotein E2. Interacts with host IRAK1; the interaction leads to inhibition of IRAK1-dependent signaling. Part of a tetrameric complex composed of host CRM1, host importin alpha/beta dimer and the viral capsid; this complex blocks the receptor-mediated transport through the nuclear pore. Interacts with host phosphatase PPP1CA; this interaction dephosphorylates the capsid protein, which increases its ability to bind to the viral genome. In terms of assembly, the precursor of protein E3/E2 and E1 form a heterodimer shortly after synthesis. Interacts with spike glycoprotein E2. The precursor of protein E3/E2 and E1 form a heterodimer shortly after synthesis. Processing of the precursor of protein E3/E2 into E2 and E3 results in a heterodimer of the spike glycoproteins E2 and E1. Spike at virion surface are constituted of three E2-E1 heterodimers. After target cell attachment and endocytosis, E1 change conformation to form homotrimers. Interacts with 6K protein. Interacts with host LDLRAD3; this interaction mediates viral entry to the host cell. As to quaternary structure, interacts with spike glycoprotein E1. Processing of the precursor of protein E3/E2 into E2 and E3 results in a heterodimer of the spike glycoproteins E2 and E1. Spike at virion surface are constituted of a trimer of E2-E1 heterodimers. Interacts with 6K protein. Interacts with host LDLRAD3; this interaction mediates viral entry to the host cell. In terms of assembly, oligomer. Interacts with spike glycoprotein E1. Interacts with spike glycoprotein E2. Post-translationally, structural polyprotein: Specific enzymatic cleavages in vivo yield mature proteins. Capsid protein is auto-cleaved during polyprotein translation, unmasking a signal peptide at the N-terminus of the precursor of E3/E2. The remaining polyprotein is then targeted to the host endoplasmic reticulum, where host signal peptidase cleaves it into pE2, 6K and E1 proteins. pE2 is further processed to mature E3 and E2 by host furin in trans-Golgi vesicle. In terms of processing, phosphorylated on serine and threonine residues. Palmitoylated via thioester bonds. These palmitoylations may induce disruption of the C-terminus transmembrane. This would result in the reorientation of E2 C-terminus from lumenal to cytoplasmic side. Post-translationally, N-glycosylated. In terms of processing, palmitoylated via thioester bonds.

It localises to the virion. It is found in the host cytoplasm. Its subcellular location is the host cell membrane. The protein localises to the host nucleus. The protein resides in the virion membrane. It localises to the host Golgi apparatus. It is found in the host trans-Golgi network. Its subcellular location is the host endoplasmic reticulum. It carries out the reaction Autocatalytic release of the core protein from the N-terminus of the togavirus structural polyprotein by hydrolysis of a -Trp-|-Ser- bond.. Its function is as follows. Forms an icosahedral capsid with a T=4 symmetry composed of 240 copies of the capsid protein surrounded by a lipid membrane through which penetrate 80 spikes composed of trimers of E1-E2 heterodimers. The capsid protein binds to the viral RNA genome at a site adjacent to a ribosome binding site for viral genome translation following genome release. Possesses a protease activity that results in its autocatalytic cleavage from the nascent structural protein. Following its self-cleavage, the capsid protein transiently associates with ribosomes, and within several minutes the protein binds to viral RNA and rapidly assembles into icosahedric core particles. The resulting nucleocapsid eventually associates with the cytoplasmic domain of the spike glycoprotein E2 at the cell membrane, leading to budding and formation of mature virions. In case of infection, new virions attach to target cells and after clathrin-mediated endocytosis their membrane fuses with the host endosomal membrane. This leads to the release of the nucleocapsid into the cytoplasm, followed by an uncoating event necessary for the genomic RNA to become accessible. The uncoating might be triggered by the interaction of capsid proteins with ribosomes. Binding of ribosomes would release the genomic RNA since the same region is genomic RNA-binding and ribosome-binding. Specifically inhibits interleukin-1 receptor-associated kinase 1/IRAK1-dependent signaling during viral entry, representing a means by which the alphaviruses may evade innate immune detection and activation prior to viral gene expression. Inhibits host transcription. Forms a tetrameric complex with XPO1/CRM1 and the nuclear import receptor importin. This complex blocks the central channel of host nuclear pores thereby inhibiting the receptor-mediated nuclear transport and thus the host mRNA and rRNA transcription. The inhibition of transcription is linked to a cytopathic effect on the host cell. Functionally, provides the signal sequence for the translocation of the precursor of protein E3/E2 to the host endoplasmic reticulum. Furin-cleaved E3 remains associated with spike glycoprotein E1 and mediates pH protection of the latter during the transport via the secretory pathway. After virion release from the host cell, the assembly protein E3 is gradually released in the extracellular space. In terms of biological role, plays a role in viral attachment to target host cell, by binding to the cell receptor LDLRAD3. Synthesized as a p62 precursor which is processed by furin at the cell membrane just before virion budding, giving rise to E2-E1 heterodimer. The p62-E1 heterodimer is stable, whereas E2-E1 is unstable and dissociate at low pH. p62 is processed at the last step, presumably to avoid E1 fusion activation before its final export to cell surface. E2 C-terminus contains a transitory transmembrane that would be disrupted by palmitoylation, resulting in reorientation of the C-terminal tail from lumenal to cytoplasmic side. This step is critical since E2 C-terminus is involved in budding by interacting with capsid proteins. This release of E2 C-terminus in cytoplasm occurs lately in protein export, and precludes premature assembly of particles at the endoplasmic reticulum membrane. Acts as a viroporin that participates in virus glycoprotein processing and transport to the plasma membrane, cell permeabilization and budding of viral particles. Disrupts the calcium homeostasis of the cell, probably at the endoplasmic reticulum level. This leads to cytoplasmic calcium elevation. Because of its lipophilic properties, the 6K protein is postulated to influence the selection of lipids that interact with the transmembrane domains of the glycoproteins, which, in turn, affects the deformability of the bilayer required for the extreme curvature that occurs as budding proceeds. Present in low amount in virions, about 3% compared to viral glycoproteins. Its function is as follows. Class II viral fusion protein. Fusion activity is inactive as long as E1 is bound to E2 in mature virion. After virus attachment to cell receptor LDLRAD3 and endocytosis, acidification of the endosome induce dissociation of E1/E2 heterodimer and concomitant trimerization of the E1 subunits. This E1 trimer is fusion active, and promotes release of viral nucleocapsid in cytoplasm after endosome and viral membrane fusion. Efficient fusion requires the presence of cholesterol and sphingolipid in the target membrane. The polypeptide is Structural polyprotein (Venezuelan equine encephalitis virus (strain Everglades Fe3-7c) (VEEV)).